The chain runs to 428 residues: Spliceosome RNA helicase DDX39B (428 aa).

The segment covering 1 to 19 (MAENDVDNELLDYEDDEVE) has biased composition (acidic residues). The disordered stretch occupies residues 1-31 (MAENDVDNELLDYEDDEVETAAGGDGAEAPA). N-acetylalanine is present on Ala-2. An N6-acetyllysine; alternate modification is found at Lys-36. Lys-36 is covalently cross-linked (Glycyl lysine isopeptide (Lys-Gly) (interchain with G-Cter in SUMO2); alternate). Ser-38 and Ser-41 each carry phosphoserine. The Q motif signature appears at 45-73 (SGFRDFLLKPELLRAIVDCGFEHPSEVQH). A Helicase ATP-binding domain is found at 76–249 (IPQAILGMDV…RKFMQDPMEI (174 aa)). Residue 89–96 (AKSGMGKT) coordinates ATP. Residue Thr-172 is modified to Phosphothreonine. A DECD box motif is present at residues 196–199 (DECD). One can recognise a Helicase C-terminal domain in the interval 261 to 422 (GLQQYYVKLK…ELPDEIDISS (162 aa)).

This sequence belongs to the DEAD box helicase family. DECD subfamily. As to quaternary structure, homodimer, and heterodimer with DDX39A. DDX39B interacts with the THO subcomplex to form the THO-DDX39B complex which multimerizes into a 28-subunit tetrameric assembly. Component of the transcription/export (TREX) complex at least composed of ALYREF/THOC4, DDX39B, SARNP/CIP29, CHTOP and the THO subcomplex; in the complex interacts with THOC2. THOC1-THOC2-THOC3-DDX39B subcomplex is sufficient for the interaction with export factor NXF1-NXT1. TREX seems to have a dynamic structure involving ATP-dependent remodeling. Within the TREX complex bridges ALYREF/THOC4 and the THO subcomplex, and, in a ATP-dependent manner, ALYREF/THOC4 and SARNP/CIP29. Component of the spliceosome. Interacts directly with U2AF2. Interacts with RBM8A, RNPS1 and SRRM1, FYTTD1/UIF, THOC1, MX1 and POLDIP3. Interacts with LUZP4. Interacts with SARNP/CIP29 (via the C-terminal domain); the interaction is direct and facilitates RNA binding of DDX39B. In terms of assembly, (Microbial infection) Interacts with human cytomegalovirus/HHV-5 protein UL69.

The protein localises to the nucleus. Its subcellular location is the nucleus speckle. It localises to the cytoplasm. The enzyme catalyses ATP + H2O = ADP + phosphate + H(+). Involved in nuclear export of spliced and unspliced mRNA. Component of the TREX complex which is thought to couple mRNA transcription, processing and nuclear export, and specifically associates with spliced mRNA and not with unspliced pre-mRNA. The TREX complex is recruited to spliced mRNAs by a transcription-independent mechanism, binds to mRNA upstream of the exon-junction complex (EJC) and is recruited in a splicing- and cap-dependent manner to a region near the 5' end of the mRNA where it functions in mRNA export to the cytoplasm via the TAP/NXF1 pathway. The THOC1-THOC2-THOC3 core complex alone is sufficient to promote ATPase activity of DDX39B; in the complex THOC2 is the only component that directly interacts with DDX39B. Associates with SARNP/CIP29, which facilitates RNA binding of DDX39B and likely plays a role in mRNA export. May undergo several rounds of ATP hydrolysis during assembly of TREX to drive subsequent loading of components such as ALYREF/THOC4 and CHTOP onto mRNA. Also associates with pre-mRNA independent of ALYREF/THOC4. Involved in the nuclear export of intronless mRNA; the ATP-bound form is proposed to recruit export adapter ALYREF/THOC4 to intronless mRNA; its ATPase activity is cooperatively stimulated by RNA and ALYREF/THOC4 and ATP hydrolysis is thought to trigger the dissociation from RNA to allow the association of ALYREF/THOC4 and the NXF1-NXT1 heterodimer. Involved in transcription elongation and genome stability. In terms of biological role, splice factor that is required for the first ATP-dependent step in spliceosome assembly and for the interaction of U2 snRNP with the branchpoint. Has both RNA-stimulated ATP binding/hydrolysis activity and ATP-dependent RNA unwinding activity. Even with the stimulation of RNA, the ATPase activity is weak. Can only hydrolyze ATP but not other NTPs. The RNA stimulation of ATPase activity does not have a strong preference for the sequence and length of the RNA. However, ssRNA stimulates the ATPase activity much more strongly than dsRNA. Can unwind 5' or 3' overhangs or blunt end RNA duplexes in vitro. The ATPase and helicase activities are not influenced by U2AF2; the effect of ALYREF/THOC4 is reported conflictingly with [PubMed:23299939] reporting a stimulatory effect. Functionally, (Microbial infection) The TREX complex is essential for the export of Kaposi's sarcoma-associated herpesvirus (KSHV) intronless mRNAs and infectious virus production. This is Spliceosome RNA helicase DDX39B from Homo sapiens (Human).